Here is a 502-residue protein sequence, read N- to C-terminus: Nondiscriminating glutamyl-tRNA synthetase EARS2, mitochondrial (502 aa).

The transit peptide at 1 to 20 (MAGMLREVCGAAASGLRVRF) directs the protein to the mitochondrion. Position 19–21 (19–21 (RFG)) interacts with L-glutamate. Positions 24-32 (PTGFLHLGG) match the 'HIGH' region motif. Position 29 (His-29) interacts with ATP. Residues Glu-55, 207–211 (YHLAN), and Arg-225 each bind L-glutamate. ATP is bound by residues Glu-228 and 263 to 267 (KLSKR). The short motif at 263–267 (KLSKR) is the 'KMSKS' region element.

It belongs to the class-I aminoacyl-tRNA synthetase family. Glutamate--tRNA ligase type 1 subfamily.

Its subcellular location is the mitochondrion matrix. The catalysed reaction is tRNA(Glx) + L-glutamate + ATP = L-glutamyl-tRNA(Glx) + AMP + diphosphate. It catalyses the reaction tRNA(Glu) + L-glutamate + ATP = L-glutamyl-tRNA(Glu) + AMP + diphosphate. It carries out the reaction tRNA(Gln) + L-glutamate + ATP = L-glutamyl-tRNA(Gln) + AMP + diphosphate. Non-discriminating glutamyl-tRNA synthetase that catalyzes aminoacylation of both mitochondrial tRNA(Glu) and tRNA(Gln) and participates in RNA aminoacylation for mitochondrial protein translation. Attachs glutamate to tRNA(Glu) or tRNA(Gln) in a two-step reaction: glutamate is first activated by ATP to form Glu-AMP and then transferred to the acceptor end of tRNA(Glu) or tRNA(Gln). This Gallus gallus (Chicken) protein is Nondiscriminating glutamyl-tRNA synthetase EARS2, mitochondrial.